Consider the following 273-residue polypeptide: MADTDIRVAIVGAGGRMGRQLIQAIYQLDGVALGAALERSGSSLIGADAGELAGIGHNGVTVCDDLTSIVDDFDILIDFTRPEGTLTHLEICRQNGKAIVIGTTGFDEAGKQAIKQASADIPIVFAANFSVGVNLVLKLLEKAAKVMGEYSDIEIIEAHHRHKVDAPSGTALAMGESIAHALGRDLKACAVYAREGYTGERDPKSIGFATIRAGDIVGEHTAMFADIGERVEITHKASSRMTFANGAVKAALWLSGKNSGLFDMKDVLNLDLL.

NAD(+)-binding positions include 12-17 and E38; that span reads GAGGRM. Residue R39 participates in NADP(+) binding. NAD(+)-binding positions include 102–104 and 126–129; these read GTT and AANF. The Proton donor/acceptor role is filled by H159. Position 160 (H160) interacts with (S)-2,3,4,5-tetrahydrodipicolinate. K163 (proton donor) is an active-site residue. 169–170 provides a ligand contact to (S)-2,3,4,5-tetrahydrodipicolinate; that stretch reads GT.

It belongs to the DapB family. In terms of assembly, homotetramer.

It localises to the cytoplasm. It carries out the reaction (S)-2,3,4,5-tetrahydrodipicolinate + NAD(+) + H2O = (2S,4S)-4-hydroxy-2,3,4,5-tetrahydrodipicolinate + NADH + H(+). The enzyme catalyses (S)-2,3,4,5-tetrahydrodipicolinate + NADP(+) + H2O = (2S,4S)-4-hydroxy-2,3,4,5-tetrahydrodipicolinate + NADPH + H(+). It functions in the pathway amino-acid biosynthesis; L-lysine biosynthesis via DAP pathway; (S)-tetrahydrodipicolinate from L-aspartate: step 4/4. In terms of biological role, catalyzes the conversion of 4-hydroxy-tetrahydrodipicolinate (HTPA) to tetrahydrodipicolinate. The chain is 4-hydroxy-tetrahydrodipicolinate reductase from Photorhabdus laumondii subsp. laumondii (strain DSM 15139 / CIP 105565 / TT01) (Photorhabdus luminescens subsp. laumondii).